The sequence spans 348 residues: Protein RecA (348 aa).

Residue 67–74 coordinates ATP; it reads GPESSGKT.

This sequence belongs to the RecA family.

Its subcellular location is the cytoplasm. In terms of biological role, can catalyze the hydrolysis of ATP in the presence of single-stranded DNA, the ATP-dependent uptake of single-stranded DNA by duplex DNA, and the ATP-dependent hybridization of homologous single-stranded DNAs. It interacts with LexA causing its activation and leading to its autocatalytic cleavage. The protein is Protein RecA of Kineococcus radiotolerans (strain ATCC BAA-149 / DSM 14245 / SRS30216).